The primary structure comprises 453 residues: Aminodeoxychorismate synthase component 1 (453 aa).

Residues serine 36, 43 to 46, and 240 to 242 contribute to the L-tryptophan site; these read YSRF and PFS. Residue glutamate 258 is the Proton donor of the active site. Catalysis depends on lysine 274, which acts as the N6-(4-deoxychorismate)-lysine intermediate.

Belongs to the anthranilate synthase component I family. As to quaternary structure, monomer. Heterodimer consisting of two non-identical subunits: a glutamine amidotransferase subunit (PabA) and a aminodeoxychorismate synthase subunit (PabB). It depends on Mg(2+) as a cofactor.

It carries out the reaction chorismate + L-glutamine = 4-amino-4-deoxychorismate + L-glutamate. It participates in cofactor biosynthesis; tetrahydrofolate biosynthesis; 4-aminobenzoate from chorismate: step 1/2. With respect to regulation, inhibited by 6-diazo-5-oxo-L-norleucine (DON). The inhibition is competitive with glutamine but uncompetitive with chorismate. Also inhibited by 2-fluorochorismate. In terms of biological role, part of a heterodimeric complex that catalyzes the two-step biosynthesis of 4-amino-4-deoxychorismate (ADC), a precursor of p-aminobenzoate (PABA) and tetrahydrofolate. In the first step, a glutamine amidotransferase (PabA) generates ammonia as a substrate that, along with chorismate, is used in the second step, catalyzed by aminodeoxychorismate synthase (PabB) to produce ADC. PabB, in the absence of PabA, can catalyze the formation of ADC in the presence of exogenous ammonia. This is Aminodeoxychorismate synthase component 1 (pabB) from Escherichia coli (strain K12).